Consider the following 417-residue polypeptide: Serine hydroxymethyltransferase (417 aa).

Residues Leu121 and 125–127 (GHL) each bind (6S)-5,6,7,8-tetrahydrofolate. Residue Lys229 is modified to N6-(pyridoxal phosphate)lysine. 355–357 (SPF) contributes to the (6S)-5,6,7,8-tetrahydrofolate binding site.

The protein belongs to the SHMT family. As to quaternary structure, homodimer. The cofactor is pyridoxal 5'-phosphate.

The protein resides in the cytoplasm. The enzyme catalyses (6R)-5,10-methylene-5,6,7,8-tetrahydrofolate + glycine + H2O = (6S)-5,6,7,8-tetrahydrofolate + L-serine. It participates in one-carbon metabolism; tetrahydrofolate interconversion. It functions in the pathway amino-acid biosynthesis; glycine biosynthesis; glycine from L-serine: step 1/1. Its function is as follows. Catalyzes the reversible interconversion of serine and glycine with tetrahydrofolate (THF) serving as the one-carbon carrier. This reaction serves as the major source of one-carbon groups required for the biosynthesis of purines, thymidylate, methionine, and other important biomolecules. Also exhibits THF-independent aldolase activity toward beta-hydroxyamino acids, producing glycine and aldehydes, via a retro-aldol mechanism. The polypeptide is Serine hydroxymethyltransferase (Xylella fastidiosa (strain M23)).